We begin with the raw amino-acid sequence, 616 residues long: Probable galacturonosyltransferase 4 (616 aa).

Residues M1–R6 lie on the Cytoplasmic side of the membrane. A helical; Signal-anchor for type II membrane protein membrane pass occupies residues N7–A29. Residues S30–P616 lie on the Lumenal side of the membrane. A disordered region spans residues Q132 to T152. 5 N-linked (GlcNAc...) asparagine glycosylation sites follow: N291, N326, N378, N481, and N514.

This sequence belongs to the glycosyltransferase 8 family. Expressed in roots, inflorescences, siliques, leaves and stems.

The protein localises to the golgi apparatus membrane. The protein operates within glycan metabolism; pectin biosynthesis. Its function is as follows. May be involved in pectin and/or xylans biosynthesis in cell walls. This chain is Probable galacturonosyltransferase 4 (GAUT4), found in Arabidopsis thaliana (Mouse-ear cress).